We begin with the raw amino-acid sequence, 397 residues long: CCA-adding enzyme (397 aa).

2 residues coordinate ATP: Gly-26 and Arg-29. CTP is bound by residues Gly-26 and Arg-29. Residues Asp-39 and Asp-41 each contribute to the Mg(2+) site. Residues Arg-110, Asp-153, Arg-156, Arg-159, and Arg-162 each contribute to the ATP site. CTP-binding residues include Arg-110, Asp-153, Arg-156, Arg-159, and Arg-162.

Belongs to the tRNA nucleotidyltransferase/poly(A) polymerase family. Bacterial CCA-adding enzyme type 3 subfamily. Homodimer. Mg(2+) is required as a cofactor.

The catalysed reaction is a tRNA precursor + 2 CTP + ATP = a tRNA with a 3' CCA end + 3 diphosphate. It catalyses the reaction a tRNA with a 3' CCA end + 2 CTP + ATP = a tRNA with a 3' CCACCA end + 3 diphosphate. In terms of biological role, catalyzes the addition and repair of the essential 3'-terminal CCA sequence in tRNAs without using a nucleic acid template. Adds these three nucleotides in the order of C, C, and A to the tRNA nucleotide-73, using CTP and ATP as substrates and producing inorganic pyrophosphate. tRNA 3'-terminal CCA addition is required both for tRNA processing and repair. Also involved in tRNA surveillance by mediating tandem CCA addition to generate a CCACCA at the 3' terminus of unstable tRNAs. While stable tRNAs receive only 3'-terminal CCA, unstable tRNAs are marked with CCACCA and rapidly degraded. The sequence is that of CCA-adding enzyme from Bacillus cytotoxicus (strain DSM 22905 / CIP 110041 / 391-98 / NVH 391-98).